Reading from the N-terminus, the 421-residue chain is MPRNIEPLDLGIQIPYHFRCPISLELMQDPVTVCTGQTYDRASIESWVSIGNNTTCPVTRAPLSDFTLIPNHTLRRLIQEWCVANRSNGVERIPTPKQPADPTSVRALLSQASAITGTHVSVRSRAAALRRLRGFARDSDKNRVLIAAHNATEILIKILFSETTSSELVSESLALLVMLPITEPNQFVSISSDPGRVEFLTRLLFDSSIETRVNAAALIEIVSTGTKSADLKGSISNSESVFEGVLDLLRNPISSRRALKIGIKTLFALCSVKSTRHIAITAGAPEILIDRLAADFDRCDTERALATVELLCRTPEGCAAFGEHALTVPLLVKTILRVSDRATEYAAGALLALCTAEERWREEAAGAGVVVQLLLMVQSECTERAKKKAQKLLKLLRDSWPDYNSFANSDDFGCSSQVVPF.

A U-box domain is found at 13–88; the sequence is QIPYHFRCPI…QEWCVANRSN (76 aa).

It carries out the reaction S-ubiquitinyl-[E2 ubiquitin-conjugating enzyme]-L-cysteine + [acceptor protein]-L-lysine = [E2 ubiquitin-conjugating enzyme]-L-cysteine + N(6)-ubiquitinyl-[acceptor protein]-L-lysine.. The protein operates within protein modification; protein ubiquitination. Functions as an E3 ubiquitin ligase. This Arabidopsis thaliana (Mouse-ear cress) protein is U-box domain-containing protein 25 (PUB25).